A 593-amino-acid polypeptide reads, in one-letter code: DNA topoisomerase I, mitochondrial (593 aa).

A mitochondrion-targeting transit peptide spans 1-43 (MLLLWLRALCRRFQHVPRRVPSRQVSRGSKASRAGWGETSKSS). Interaction with DNA regions lie at residues 254-255 (KY), 317-322 (RTGNEK), and 414-416 (TAK). Residues 261–593 (SSKPKGEMDW…FNQAGEDFEF (333 aa)) form the Topo IB-type catalytic domain. The O-(3'-phospho-DNA)-tyrosine intermediate role is filled by Y551.

The protein belongs to the type IB topoisomerase family. Requires Ca(2+) as cofactor. The cofactor is Mg(2+).

The protein resides in the mitochondrion. The catalysed reaction is ATP-independent breakage of single-stranded DNA, followed by passage and rejoining.. Releases the supercoiling and torsional tension of DNA introduced during duplication of mitochondrial DNA by transiently cleaving and rejoining one strand of the DNA duplex. Introduces a single-strand break via transesterification at a target site in duplex DNA. The scissile phosphodiester is attacked by the catalytic tyrosine of the enzyme, resulting in the formation of a DNA-(3'-phosphotyrosyl)-enzyme intermediate and the expulsion of a 5'-OH DNA strand. The free DNA strand then rotates around the intact phosphodiester bond on the opposing strand, thus removing DNA supercoils. Finally, in the religation step, the DNA 5'-OH attacks the covalent intermediate to expel the active-site tyrosine and restore the DNA phosphodiester backbone. The chain is DNA topoisomerase I, mitochondrial (Top1mt) from Rattus norvegicus (Rat).